A 184-amino-acid polypeptide reads, in one-letter code: Shikimate kinase (184 aa).

17-22 (SVGKTS) provides a ligand contact to ATP. A Mg(2+)-binding site is contributed by Thr21. Residues Asp39 and Gly85 each coordinate substrate.

The protein belongs to the shikimate kinase family. Monomer. Requires Mg(2+) as cofactor.

Its subcellular location is the cytoplasm. The catalysed reaction is shikimate + ATP = 3-phosphoshikimate + ADP + H(+). Its pathway is metabolic intermediate biosynthesis; chorismate biosynthesis; chorismate from D-erythrose 4-phosphate and phosphoenolpyruvate: step 5/7. In terms of biological role, catalyzes the specific phosphorylation of the 3-hydroxyl group of shikimic acid using ATP as a cosubstrate. The protein is Shikimate kinase of Chlamydia muridarum (strain MoPn / Nigg).